The primary structure comprises 413 residues: Alpha-1-antitrypsin-like protein GS55-MS (413 aa).

The N-terminal stretch at 1 to 24 (MPSSISWGLLLLAGLSCLVAGSLA) is a signal peptide. 3 N-linked (GlcNAc...) asparagine glycosylation sites follow: Asn-65, Asn-102, and Asn-266. The interval 368–387 (GATFLEMMPMSLPPEVKFDK) is RCL.

The protein belongs to the serpin family.

The protein localises to the secreted. Its function is as follows. Inhibitor of serine proteases. Its primary target is elastase, but it also has a moderate affinity for plasmin and thrombin. The polypeptide is Alpha-1-antitrypsin-like protein GS55-MS (Ictidomys tridecemlineatus (Thirteen-lined ground squirrel)).